Here is a 533-residue protein sequence, read N- to C-terminus: Probable anion transporter 4, chloroplastic (533 aa).

12 helical membrane-spanning segments follow: residues 117–137 (MLAL…VAIV), 152–172 (IVQS…GTLV), 179–199 (VVMA…PWAA), 203–223 (LWAL…ALPC), 243–263 (IAMA…PILM), 267–287 (GIYG…LVWL), 342–362 (VIVA…WMPI), 376–396 (AWFS…AGFW), 417–437 (IGFI…QPLV), 438–458 (ASAW…GFLI), 474–494 (MCLT…GFFV), and 502–522 (GFIL…NIYA).

It belongs to the major facilitator superfamily. Sodium/anion cotransporter (TC 2.A.1.14) family. Expressed in leaf veins and root tips.

The protein resides in the plastid. It localises to the chloroplast membrane. Its function is as follows. Inorganic phosphate and probable anion transporter. The polypeptide is Probable anion transporter 4, chloroplastic (ANTR4) (Arabidopsis thaliana (Mouse-ear cress)).